A 924-amino-acid polypeptide reads, in one-letter code: Probable dipeptidyl-aminopeptidase B (924 aa).

Residues 1 to 104 (MPPFTYSDDT…DQRSPGDGQR (104 aa)) form a disordered region. Topologically, residues 1 to 111 (MPPFTYSDDT…GQRMDRSLRR (111 aa)) are cytoplasmic. Positions 9–23 (DTLRSGRDRFRDHSP) are enriched in basic and acidic residues. Residues 31–43 (SQETDSSASTTSI) are compositionally biased toward polar residues. Basic and acidic residues-rich tracts occupy residues 47–58 (RIQERLDTKEFT) and 92–104 (SRSD…DGQR). A helical; Signal-anchor for type II membrane protein membrane pass occupies residues 112–132 (WLFIVSGVLVATWVIGLFVFV). Residues 133–924 (SSKAYKPSSS…GMKKRAAPTA (792 aa)) lie on the Vacuolar side of the membrane. 2 N-linked (GlcNAc...) asparagine glycosylation sites follow: asparagine 231 and asparagine 364. Residue serine 768 is the Charge relay system of the active site. Asparagine 827 carries an N-linked (GlcNAc...) asparagine glycan. Residues aspartate 845 and histidine 878 each act as charge relay system in the active site.

The protein belongs to the peptidase S9B family.

It is found in the vacuole membrane. It carries out the reaction Release of an N-terminal dipeptide, Xaa-Yaa-|-Zaa-, from a polypeptide, preferentially when Yaa is Pro, provided Zaa is neither Pro nor hydroxyproline.. Functionally, type IV dipeptidyl-peptidase which removes N-terminal dipeptides sequentially from polypeptides having unsubstituted N-termini provided that the penultimate residue is proline. This Sordaria macrospora (strain ATCC MYA-333 / DSM 997 / K(L3346) / K-hell) protein is Probable dipeptidyl-aminopeptidase B (DAPB).